Here is a 147-residue protein sequence, read N- to C-terminus: MRLKIMELRYKRELEKLIEKAEKSLEASENLYNSEFYDFAVSRIYYSMFYCVKALLLTKEINPKKHSGVLKMFAKEFIKTNELDVELFEYINEAYNYRQTADYDATIEIKKEEAEYLLHKGHIFLNKTKKYLISKNILKGENDNTKS.

This sequence belongs to the UPF0332 family.

Its function is as follows. Putative toxin component of a putative type VII toxin-antitoxin (TA) system. Its cognate antitoxin might be MJ0141. The sequence is that of Putative toxin MJ0142 from Methanocaldococcus jannaschii (strain ATCC 43067 / DSM 2661 / JAL-1 / JCM 10045 / NBRC 100440) (Methanococcus jannaschii).